Here is a 529-residue protein sequence, read N- to C-terminus: PTS system alpha-glucoside-specific EIICB component (529 aa).

The PTS EIIC type-1 domain occupies M1–D416. 12 helical membrane-spanning segments follow: residues F8 to L28, G59 to A79, F91 to I111, V130 to L150, V170 to I190, I198 to F218, I222 to A242, G272 to M292, V304 to L324, F328 to A348, A352 to I372, and G380 to F400. The 80-residue stretch at A450–G529 folds into the PTS EIIB type-1 domain. The Phosphocysteine intermediate; for EIIB activity role is filled by C472.

The protein localises to the cell membrane. The phosphoenolpyruvate-dependent sugar phosphotransferase system (sugar PTS), a major carbohydrate active -transport system, catalyzes the phosphorylation of incoming sugar substrates concomitantly with their translocation across the cell membrane. This system is probably involved in transport of the alpha-glucosides trehalulose, turanose, maltulose and palatinose. In Leptotrichia buccalis (strain ATCC 14201 / DSM 1135 / JCM 12969 / NCTC 10249 / C-1013-b), this protein is PTS system alpha-glucoside-specific EIICB component.